We begin with the raw amino-acid sequence, 175 residues long: Crossover junction endodeoxyribonuclease RuvC (175 aa).

Active-site residues include D8, E69, and D141. D8, E69, and D141 together coordinate Mg(2+).

This sequence belongs to the RuvC family. As to quaternary structure, homodimer which binds Holliday junction (HJ) DNA. The HJ becomes 2-fold symmetrical on binding to RuvC with unstacked arms; it has a different conformation from HJ DNA in complex with RuvA. In the full resolvosome a probable DNA-RuvA(4)-RuvB(12)-RuvC(2) complex forms which resolves the HJ. Mg(2+) is required as a cofactor.

The protein resides in the cytoplasm. It carries out the reaction Endonucleolytic cleavage at a junction such as a reciprocal single-stranded crossover between two homologous DNA duplexes (Holliday junction).. Functionally, the RuvA-RuvB-RuvC complex processes Holliday junction (HJ) DNA during genetic recombination and DNA repair. Endonuclease that resolves HJ intermediates. Cleaves cruciform DNA by making single-stranded nicks across the HJ at symmetrical positions within the homologous arms, yielding a 5'-phosphate and a 3'-hydroxyl group; requires a central core of homology in the junction. The consensus cleavage sequence is 5'-(A/T)TT(C/G)-3'. Cleavage occurs on the 3'-side of the TT dinucleotide at the point of strand exchange. HJ branch migration catalyzed by RuvA-RuvB allows RuvC to scan DNA until it finds its consensus sequence, where it cleaves and resolves the cruciform DNA. This Colwellia psychrerythraea (strain 34H / ATCC BAA-681) (Vibrio psychroerythus) protein is Crossover junction endodeoxyribonuclease RuvC.